Consider the following 541-residue polypeptide: MDSQRNLFLVALLFVSFLIWQAWQTDHNPQPVAQTAGQSISDTASQAVPESGQGKLITVKTDVLALTINTRGGDIEQADLLAYPATLGSDTPFQLLETTPQFVYQAQSGLTGKSGPDNPANGARPLYSANQTSYEMLPGQDELRIPLTYTAANGVIYTKTFVLKRNDYAIAVDYKVKNDSHDALDLTLFGQLKQSVDLPKHRDTGSNNFALHTFRGAAYSSSDDKYQKYSFSDIEDKNLNVQTKGGWVAMLQQYFATAWIPHDSGVNTFYSANLGNGQAAIGYKAPSVSVAPNTEKVLSTTLWVGPELQSDMAAVAPHLDLTVDYGWLWFISQPLFKLLQLIHSFVGNWGFAIIIITFIVRGIMYPLTKAQYTSMAKMRMLQPKLQAMRERIGDDKQRMSQEMMALYKTEKVNPLGGCFPLLIQMPIFLALYYMLMGSVELRQAPFALWIHDLAAPDPFYILPILMGVTMFFIQKMSPTTVTDPMQQKIMTFMPVIFTVFFLWFPSGLVLYYIVSNLVTIIQQQLIYRGLEKRGLHSRDKK.

A run of 5 helical transmembrane segments spans residues L7–H27, Q340–V360, L415–L435, L453–I473, and P494–V514.

It belongs to the OXA1/ALB3/YidC family. Type 1 subfamily. As to quaternary structure, interacts with the Sec translocase complex via SecD. Specifically interacts with transmembrane segments of nascent integral membrane proteins during membrane integration.

The protein resides in the cell inner membrane. Functionally, required for the insertion and/or proper folding and/or complex formation of integral membrane proteins into the membrane. Involved in integration of membrane proteins that insert both dependently and independently of the Sec translocase complex, as well as at least some lipoproteins. Aids folding of multispanning membrane proteins. In Edwardsiella ictaluri (strain 93-146), this protein is Membrane protein insertase YidC.